Here is a 346-residue protein sequence, read N- to C-terminus: Peroxidase 37 (346 aa).

An N-terminal signal peptide occupies residues 1 to 22 (MHSSLIKLGFLLLLIQVSLSHA). The residue at position 23 (Gln23) is a Pyrrolidone carboxylic acid. Cystine bridges form between Cys33/Cys113, Cys66/Cys71, Cys119/Cys323, and Cys199/Cys231. Residue His64 is the Proton acceptor of the active site. Ca(2+)-binding residues include Asp65, Val68, Gly70, Asp72, and Ser74. An N-linked (GlcNAc...) asparagine glycan is attached at Asn79. Residue Pro161 participates in substrate binding. His192 contacts heme b. Thr193 contributes to the Ca(2+) binding site. Asn208 and Asn236 each carry an N-linked (GlcNAc...) asparagine glycan. Ca(2+)-binding residues include Asp244, Thr247, and Asp252.

It belongs to the peroxidase family. Classical plant (class III) peroxidase subfamily. Heme b serves as cofactor. Ca(2+) is required as a cofactor.

It localises to the secreted. The protein resides in the vacuole. The enzyme catalyses 2 a phenolic donor + H2O2 = 2 a phenolic radical donor + 2 H2O. In terms of biological role, removal of H(2)O(2), oxidation of toxic reductants, biosynthesis and degradation of lignin, suberization, auxin catabolism, response to environmental stresses such as wounding, pathogen attack and oxidative stress. These functions might be dependent on each isozyme/isoform in each plant tissue. The chain is Peroxidase 37 (PER37) from Arabidopsis thaliana (Mouse-ear cress).